Reading from the N-terminus, the 267-residue chain is Regulatory protein RecX (267 aa).

It belongs to the RecX family.

Its subcellular location is the cytoplasm. Functionally, modulates RecA activity. The polypeptide is Regulatory protein RecX (Staphylococcus epidermidis (strain ATCC 12228 / FDA PCI 1200)).